The sequence spans 502 residues: ATP synthase subunit alpha (502 aa).

The disordered stretch occupies residues 114-139 (PIDGRGPIETSKTRPIESPAPGVMDR). 169 to 176 (GDRQTGKT) lines the ATP pocket.

This sequence belongs to the ATPase alpha/beta chains family. As to quaternary structure, F-type ATPases have 2 components, CF(1) - the catalytic core - and CF(0) - the membrane proton channel. CF(1) has five subunits: alpha(3), beta(3), gamma(1), delta(1), epsilon(1). CF(0) has three main subunits: a(1), b(2) and c(9-12). The alpha and beta chains form an alternating ring which encloses part of the gamma chain. CF(1) is attached to CF(0) by a central stalk formed by the gamma and epsilon chains, while a peripheral stalk is formed by the delta and b chains.

The protein resides in the cell membrane. The enzyme catalyses ATP + H2O + 4 H(+)(in) = ADP + phosphate + 5 H(+)(out). In terms of biological role, produces ATP from ADP in the presence of a proton gradient across the membrane. The alpha chain is a regulatory subunit. The chain is ATP synthase subunit alpha from Halalkalibacterium halodurans (strain ATCC BAA-125 / DSM 18197 / FERM 7344 / JCM 9153 / C-125) (Bacillus halodurans).